Here is a 25-residue protein sequence, read N- to C-terminus: Insulin mimetic protein (25 aa).

The tract at residues 1–25 (TKDPELKQCKKQQKKQQQYDDDDKK) is disordered.

Glycosylated. In terms of tissue distribution, expressed in seed.

In Cnidoscolus quercifolius, this protein is Insulin mimetic protein.